The following is a 138-amino-acid chain: MRGLSRNSGAAAIFAILLILAVHNWSVAVSSQSTEFAGDFPPFETECRGTIAECSVSAALGDGGDLFYGGGEMGEEFEMDSEINRRILATRRYISYGALRRNTIPCSRRGASYYNCRRGAQANPYSRGCSAITRCRRS.

The first 28 residues, 1 to 28 (MRGLSRNSGAAAIFAILLILAVHNWSVA), serve as a signal peptide directing secretion. Residues 29–88 (VSSQSTEFAGDFPPFETECRGTIAECSVSAALGDGGDLFYGGGEMGEEFEMDSEINRRIL) constitute a propeptide, removed in mature form. Intrachain disulfides connect C106–C116 and C129–C135.

This sequence belongs to the plant rapid alkalinization factor (RALF) family. In terms of processing, proteolytically cleaved, probably by SBT6.1 (S1P), a subtilisin-like serine protease (subtilase).

It localises to the secreted. In terms of biological role, cell signaling peptide that may regulate plant stress, growth, and development. Mediates a rapid alkalinization of extracellular space by mediating a transient increase in the cytoplasmic Ca(2+) concentration leading to a calcium-dependent signaling events through a cell surface receptor and a concomitant activation of some intracellular mitogen-activated protein kinases. Negatively regulates brassinolide (BL)-mediated signaling pathway (e.g. BL-induced hypocotyl elongation and branching limitation). The polypeptide is Rapid alkalinization factor 23 (RALF23) (Arabidopsis thaliana (Mouse-ear cress)).